Reading from the N-terminus, the 199-residue chain is MSKVLVLKTTAQADEVSNSVALTNRFLEEYKKFNPDDEIIIVDLNKDEVGTSILTSETSSTFYQQEVTKKYINLLKSVDKLVIACPMYNFSTPVTLKSFIDHVSVANETFSYKYSKKGDVIGLITNLKAQILGVQGAPLGWYPWGQHTQYVEGAMRFLGIDFNKTVLLAGVKVAPLLQLTPEQRVETIIDEVIEAARTF.

Residues 17–19 (SNS) and 87–90 (MYNF) each bind FMN.

It belongs to the azoreductase type 1 family. Homodimer. FMN is required as a cofactor.

It catalyses the reaction 2 a quinone + NADH + H(+) = 2 a 1,4-benzosemiquinone + NAD(+). The catalysed reaction is N,N-dimethyl-1,4-phenylenediamine + anthranilate + 2 NAD(+) = 2-(4-dimethylaminophenyl)diazenylbenzoate + 2 NADH + 2 H(+). Functionally, quinone reductase that provides resistance to thiol-specific stress caused by electrophilic quinones. In terms of biological role, also exhibits azoreductase activity. Catalyzes the reductive cleavage of the azo bond in aromatic azo compounds to the corresponding amines. In Mycoplasma mycoides subsp. mycoides SC (strain CCUG 32753 / NCTC 10114 / PG1), this protein is FMN-dependent NADH:quinone oxidoreductase.